Consider the following 375-residue polypeptide: Aminomethyltransferase (375 aa).

Belongs to the GcvT family. In terms of assembly, the glycine cleavage system is composed of four proteins: P, T, L and H.

The catalysed reaction is N(6)-[(R)-S(8)-aminomethyldihydrolipoyl]-L-lysyl-[protein] + (6S)-5,6,7,8-tetrahydrofolate = N(6)-[(R)-dihydrolipoyl]-L-lysyl-[protein] + (6R)-5,10-methylene-5,6,7,8-tetrahydrofolate + NH4(+). Its function is as follows. The glycine cleavage system catalyzes the degradation of glycine. In Cupriavidus necator (strain ATCC 17699 / DSM 428 / KCTC 22496 / NCIMB 10442 / H16 / Stanier 337) (Ralstonia eutropha), this protein is Aminomethyltransferase.